We begin with the raw amino-acid sequence, 443 residues long: 3-isopropylmalate dehydratase large subunit (443 aa).

3 residues coordinate [4Fe-4S] cluster: cysteine 347, cysteine 407, and cysteine 410.

It belongs to the aconitase/IPM isomerase family. LeuC type 1 subfamily. Heterodimer of LeuC and LeuD. Requires [4Fe-4S] cluster as cofactor.

The enzyme catalyses (2R,3S)-3-isopropylmalate = (2S)-2-isopropylmalate. It participates in amino-acid biosynthesis; L-leucine biosynthesis; L-leucine from 3-methyl-2-oxobutanoate: step 2/4. Catalyzes the isomerization between 2-isopropylmalate and 3-isopropylmalate, via the formation of 2-isopropylmaleate. This is 3-isopropylmalate dehydratase large subunit from Buchnera aphidicola subsp. Uroleucon obscurum.